A 466-amino-acid polypeptide reads, in one-letter code: 23S rRNA (uracil(1939)-C(5))-methyltransferase RlmD (466 aa).

Positions 1-54 (MVDVLNIESLDLEARGIAHRDGKVLFVEGALPGERVTVQTVRRKPSYEIAKVEE) constitute a TRAM domain. Residues Cys-67, Cys-73, Cys-76, and Cys-155 each contribute to the [4Fe-4S] cluster site. S-adenosyl-L-methionine contacts are provided by Gln-264, Phe-293, Asn-298, Glu-314, Asn-342, and Asp-363. Catalysis depends on Cys-393, which acts as the Nucleophile.

Belongs to the class I-like SAM-binding methyltransferase superfamily. RNA M5U methyltransferase family. RlmD subfamily.

It carries out the reaction uridine(1939) in 23S rRNA + S-adenosyl-L-methionine = 5-methyluridine(1939) in 23S rRNA + S-adenosyl-L-homocysteine + H(+). Catalyzes the formation of 5-methyl-uridine at position 1939 (m5U1939) in 23S rRNA. This chain is 23S rRNA (uracil(1939)-C(5))-methyltransferase RlmD, found in Bordetella bronchiseptica (strain ATCC BAA-588 / NCTC 13252 / RB50) (Alcaligenes bronchisepticus).